Consider the following 298-residue polypeptide: Glutamyl-Q tRNA(Asp) synthetase (298 aa).

L-glutamate-binding positions include 9 to 13 (RFAPS) and Glu-45. Residues 12–22 (PSPSGELHFGS) carry the 'HIGH' region motif. Positions 101, 103, 115, and 119 each coordinate Zn(2+). The L-glutamate site is built by Tyr-172 and Arg-190. The short motif at 228–232 (KLSKQ) is the 'KMSKS' region element. ATP is bound at residue Lys-231.

Belongs to the class-I aminoacyl-tRNA synthetase family. GluQ subfamily. Zn(2+) serves as cofactor.

Its function is as follows. Catalyzes the tRNA-independent activation of glutamate in presence of ATP and the subsequent transfer of glutamate onto a tRNA(Asp). Glutamate is transferred on the 2-amino-5-(4,5-dihydroxy-2-cyclopenten-1-yl) moiety of the queuosine in the wobble position of the QUC anticodon. The sequence is that of Glutamyl-Q tRNA(Asp) synthetase from Salmonella choleraesuis (strain SC-B67).